We begin with the raw amino-acid sequence, 245 residues long: NAD(P)H-hydrate epimerase (245 aa).

Residues 16–224 (AAALDAELMA…HIADKYDLEV (209 aa)) enclose the YjeF N-terminal domain. A (6S)-NADPHX-binding site is contributed by 68–72 (NNGGD). Positions 69 and 131 each coordinate K(+). Residues 135 to 141 (GFSFKPP) and aspartate 164 contribute to the (6S)-NADPHX site. Residue serine 167 coordinates K(+).

This sequence belongs to the NnrE/AIBP family. The cofactor is K(+).

It localises to the cytoplasm. Its subcellular location is the mitochondrion. The catalysed reaction is (6R)-NADHX = (6S)-NADHX. It catalyses the reaction (6R)-NADPHX = (6S)-NADPHX. In terms of biological role, catalyzes the epimerization of the S- and R-forms of NAD(P)HX, a damaged form of NAD(P)H that is a result of enzymatic or heat-dependent hydration. This is a prerequisite for the S-specific NAD(P)H-hydrate dehydratase to allow the repair of both epimers of NAD(P)HX. The chain is NAD(P)H-hydrate epimerase from Yarrowia lipolytica (strain CLIB 122 / E 150) (Yeast).